Here is a 389-residue protein sequence, read N- to C-terminus: Succinate--CoA ligase [ADP-forming] subunit beta (389 aa).

Residues Lys-46, 53-55, Glu-99, Cys-102, and Glu-107 contribute to the ATP site; that span reads GRG. Residues Asn-199 and Asp-213 each coordinate Mg(2+). Residues Asn-264 and 321-323 contribute to the substrate site; that span reads GIV.

It belongs to the succinate/malate CoA ligase beta subunit family. As to quaternary structure, heterotetramer of two alpha and two beta subunits. Mg(2+) serves as cofactor.

It catalyses the reaction succinate + ATP + CoA = succinyl-CoA + ADP + phosphate. It carries out the reaction GTP + succinate + CoA = succinyl-CoA + GDP + phosphate. Its pathway is carbohydrate metabolism; tricarboxylic acid cycle; succinate from succinyl-CoA (ligase route): step 1/1. Succinyl-CoA synthetase functions in the citric acid cycle (TCA), coupling the hydrolysis of succinyl-CoA to the synthesis of either ATP or GTP and thus represents the only step of substrate-level phosphorylation in the TCA. The beta subunit provides nucleotide specificity of the enzyme and binds the substrate succinate, while the binding sites for coenzyme A and phosphate are found in the alpha subunit. In Haemophilus influenzae (strain PittEE), this protein is Succinate--CoA ligase [ADP-forming] subunit beta.